The primary structure comprises 236 residues: 2,3,4,5-tetrahydropyridine-2,6-dicarboxylate N-acetyltransferase (236 aa).

Belongs to the transferase hexapeptide repeat family. DapH subfamily.

It carries out the reaction (S)-2,3,4,5-tetrahydrodipicolinate + acetyl-CoA + H2O = L-2-acetamido-6-oxoheptanedioate + CoA. The protein operates within amino-acid biosynthesis; L-lysine biosynthesis via DAP pathway; LL-2,6-diaminopimelate from (S)-tetrahydrodipicolinate (acetylase route): step 1/3. Its function is as follows. Catalyzes the transfer of an acetyl group from acetyl-CoA to tetrahydrodipicolinate. This chain is 2,3,4,5-tetrahydropyridine-2,6-dicarboxylate N-acetyltransferase, found in Bacillus subtilis (strain 168).